A 385-amino-acid chain; its full sequence is Prostacyclin receptor (385 aa).

Topologically, residues 1–16 (MADSCRNLTYVRDSVG) are extracellular. Disulfide bonds link Cys-5-Cys-165 and Cys-92-Cys-170. An N-linked (GlcNAc...) asparagine glycan is attached at Asn-7. Residues 17–38 (PATSTLMFVAGVVGNGLALGIL) traverse the membrane as a helical segment. Residues 39-51 (GARRHSRPSAFAV) are Cytoplasmic-facing. A helical membrane pass occupies residues 52 to 76 (LVTGLGVTDLLGTCFLSPAVFAAYA). Residues 77–94 (RNSSLLGLARGRPALCDA) lie on the Extracellular side of the membrane. A helical membrane pass occupies residues 95 to 115 (FAFAMTFFGLASTLILFAMAV). Residues 116-134 (ERCLALSHPYLYAQLDGPR) are Cytoplasmic-facing. Residues 135-158 (RARLALPAIYAFCTIFCSLPFLGL) form a helical membrane-spanning segment. At 159–181 (GQHQQYCPGSWCFIRMRSAEPGG) the chain is on the extracellular side. The chain crosses the membrane as a helical span at residues 182–208 (CAFLLAYASLVALLVAAIVLCNGSVTL). Over 209–234 (SLCRMYRQQRRHQARCPRPRAGEDEV) the chain is Cytoplasmic. A helical transmembrane segment spans residues 235-259 (DHLILLALMTGIMAVCSLPLTPQIR). The Extracellular segment spans residues 260-273 (GFTQAIAPDSSEMG). Residues 274-294 (DLLAFRFNAFNPILDPWVFIL) form a helical membrane-spanning segment. Over 295-385 (FRKSVFQRLK…AGSEAACSLC (91 aa)) the chain is Cytoplasmic. The interval 315 to 344 (AQGDSRTSLSQSASGRKDSSAPPALEGKKG) is disordered. A compositionally biased stretch (polar residues) spans 318 to 328 (DSRTSLSQSAS). Cys-382 bears the Cysteine methyl ester mark. Cys-382 is lipidated: S-farnesyl cysteine. Positions 383-385 (SLC) are cleaved as a propeptide — removed in mature form.

The protein belongs to the G-protein coupled receptor 1 family. As to quaternary structure, interacts (non-isoprenylated C-terminus) with PDZK1. Isoprenylation does not influence ligand binding but is required for efficient coupling to the effectors adenylyl cyclase and phospholipase C.

It localises to the cell membrane. Functionally, receptor for prostacyclin (prostaglandin I2 or PGI2). The activity of this receptor is mediated by G(s) proteins which activate adenylate cyclase. This is Prostacyclin receptor (PTGIR) from Bos taurus (Bovine).